The primary structure comprises 384 residues: Probable circularly permuted 1,3-beta-glucanase PGA52 (384 aa).

Residues 1 to 17 (MLFSSLLVSTLVSVATA) form the signal peptide. N-linked (GlcNAc...) asparagine glycans are attached at residues N118, N128, N170, N210, and N244. An ExDxxE motif motif is present at residues 254 to 259 (EFDIFE). Residues N262 and N318 are each glycosylated (N-linked (GlcNAc...) asparagine). Residue S361 is the site of GPI-anchor amidated serine attachment. The propeptide at 362–384 (GGVSYQPSFITNLLMTVLTLWVI) is removed in mature form.

It belongs to the PGA52 family.

Its subcellular location is the cell membrane. The catalysed reaction is Hydrolysis of (1-&gt;3)-beta-D-glucosidic linkages in (1-&gt;3)-beta-D-glucans.. In terms of biological role, probable circularly permuted 1,3-beta-glucanase involved in cell wall modification through beta-1,3-glucan network alterations such as increased branching or remodeling. The protein is Probable circularly permuted 1,3-beta-glucanase PGA52 (PGA52) of Candida albicans (strain SC5314 / ATCC MYA-2876) (Yeast).